The primary structure comprises 1005 residues: Pikachurin (1005 aa).

An N-terminal signal peptide occupies residues 1-24 (MDLISTFLLHFLLLACSLPPGAVS). 2 Fibronectin type-III domains span residues 37–136 (PPLD…TLSQ) and 144–239 (APHQ…TLGP). Asn47 is a glycosylation site (N-linked (GlcNAc...) asparagine). Residues 281–328 (PATKVGNKKSKKTSVSNSEMDSRLAQPTSASLPETTVAVPPTPAQRKG) form a disordered region. Over residues 305–314 (AQPTSASLPE) the composition is skewed to polar residues. One can recognise an EGF-like 1 domain in the interval 339–377 (FDMSCDETLCSADSFCVNDYAWGGSRCHCNLGKGGEACS). 11 disulfides stabilise this stretch: Cys343/Cys354, Cys348/Cys365, Cys367/Cys376, Cys530/Cys560, Cys565/Cys576, Cys570/Cys586, Cys588/Cys597, Cys784/Cys795, Cys789/Cys804, Cys806/Cys815, and Cys975/Cys1002. The 179-residue stretch at 382–560 (IQYPQFFGHS…ALNGADVGEC (179 aa)) folds into the Laminin G-like 1 domain. 2 consecutive EGF-like domains span residues 561–598 (SSGI…RHCE) and 780–816 (AAHP…LNCQ). A Laminin G-like 2 domain is found at 605-784 (IPQFRESLRS…VNVENAAHPC (180 aa)). The region spanning 823–1002 (IEIPQFIGRS…AVDGKNINTC (180 aa)) is the Laminin G-like 3 domain.

In terms of assembly, interacts with DAG1 alpha-dystroglycan. Interacts with GPR158 and GPR179; transsynaptic interaction is required for synaptic organization of photoreceptor cells. O-glycosylated; contains chondroitin sulfate and heparan sulfate.

Its subcellular location is the secreted. It localises to the extracellular space. It is found in the extracellular matrix. The protein resides in the synaptic cleft. The protein localises to the presynaptic active zone. Its function is as follows. Involved in both the retinal photoreceptor ribbon synapse formation and physiological functions of visual perception. Plays a key role in the synaptic organization of photoreceptors by mediating transsynaptic interaction between alpha-dystroglycan and GPR179 on the postsynaptic membrane. Necessary for proper bipolar dendritic tip apposition to the photoreceptor ribbon synapse. Promotes matrix assembly and cell adhesiveness. This is Pikachurin (Egflam) from Rattus norvegicus (Rat).